The sequence spans 394 residues: S-adenosylmethionine synthase 1 (394 aa).

E11 provides a ligand contact to Mg(2+). Position 17 (H17) interacts with ATP. E45 lines the K(+) pocket. 2 residues coordinate L-methionine: E58 and Q101. ATP-binding positions include 169–171, 237–240, D248, 254–255, A271, K275, and K279; these read DGK, SGRF, and RK. D248 contributes to the L-methionine binding site. Residue K279 coordinates L-methionine.

This sequence belongs to the AdoMet synthase family. Homotetramer. Mn(2+) serves as cofactor. Requires Mg(2+) as cofactor. The cofactor is Co(2+). It depends on K(+) as a cofactor.

It is found in the cytoplasm. The catalysed reaction is L-methionine + ATP + H2O = S-adenosyl-L-methionine + phosphate + diphosphate. The protein operates within amino-acid biosynthesis; S-adenosyl-L-methionine biosynthesis; S-adenosyl-L-methionine from L-methionine: step 1/1. In terms of biological role, catalyzes the formation of S-adenosylmethionine from methionine and ATP. The reaction comprises two steps that are both catalyzed by the same enzyme: formation of S-adenosylmethionine (AdoMet) and triphosphate, and subsequent hydrolysis of the triphosphate. The polypeptide is S-adenosylmethionine synthase 1 (SAM1) (Hordeum vulgare (Barley)).